A 1909-amino-acid chain; its full sequence is Plexin-B3 (1909 aa).

The N-terminal stretch at 1–44 is a signal peptide; sequence MCHAAQETPLLHHFMAPVMARWPPFGLCLLLLLLSPPPLPLTGA. A Sema domain is found at 45–471; sequence HRFSAPNTTL…TAHQVDRIPV (427 aa). The Extracellular segment spans residues 45 to 1255; that stretch reads HRFSAPNTTL…PLSAFPVEAQ (1211 aa). An N-linked (GlcNAc...) asparagine glycan is attached at N51. Intrachain disulfides connect C98–C107 and C132–C140. A glycan (N-linked (GlcNAc...) asparagine) is linked at N231. 8 cysteine pairs are disulfide-bonded: C267-C370, C283-C315, C333-C357, C474-C491, C480-C525, C483-C500, C494-C506, and C562-C580. One can recognise a PSI 1 domain in the interval 473–526; that stretch reads ACPQFPDCASCLQAQDPLCGWCVLQGRCTRKGQCGRAGQLNQWLWSYEEDSHCL. An N-linked (GlcNAc...) asparagine glycan is attached at N615. 2 consecutive PSI domains span residues 620–682 and 787–833; these read DCSA…GACP and DCAM…LLCP. N-linked (GlcNAc...) asparagine glycosylation is found at N802, N900, N957, N1101, and N1218. 4 IPT/TIG domains span residues 835 to 925, 927 to 1012, 1015 to 1145, and 1159 to 1244; these read PSID…FTYQ, PVLL…FRYT, PQLV…FLYQ, and ARPY…YEAE. A helical membrane pass occupies residues 1256–1276; that stretch reads AGVGMGAAVLIAAVLLLTLMY. Topologically, residues 1277 to 1909 are cytoplasmic; that stretch reads RHKSKQALRD…ALVENKVTDL (633 aa).

Belongs to the plexin family. As to quaternary structure, interacts (via cytoplasmic domain) with RAC1 and ARHGDIA. Binds MET and MST1R. Interacts (via cytoplasmic domain) with FSCN1. Interacts with RIT2/RIN. May form homodimers (via Sema domain). As to expression, expression detected in Purkinje and granular cells in cerebellum, and in brain neocortex but not in corpus callosum. Expressed in glioma cells and embryonic kidney cells (at protein level). Expressed in brain, liver, pancreas and placenta, with weak expression detected also in lung and kidney. Expressed in several glioma cell lines.

The protein localises to the cell membrane. Its function is as follows. Receptor for SEMA5A that plays a role in axon guidance, invasive growth and cell migration. Stimulates neurite outgrowth and mediates Ca(2+)/Mg(2+)-dependent cell aggregation. In glioma cells, SEMA5A stimulation of PLXNB3 results in the disassembly of F-actin stress fibers, disruption of focal adhesions and cellular collapse as well as inhibition of cell migration and invasion through ARHGDIA-mediated inactivation of RAC1. The sequence is that of Plexin-B3 (PLXNB3) from Homo sapiens (Human).